The sequence spans 397 residues: uncharacterized protein (397 aa).

Helical transmembrane passes span 5 to 25 (LKILVIGMFINVTGASFLWPL), 43 to 63 (LVLMLNSGASVAGNLCGGFLF), 69 to 89 (FKSIMLGIAITLASLMGLVFF), 92 to 112 (WPAYIVLLTIVGFGSGVVFPA), 131 to 151 (AIYVAQNAGVAVGSALGGVVA), 157 to 177 (YVFLANAVLYLIFFFIVYFGF), 202 to 222 (FAALIILSGGYVLGWLAYSQW), 233 to 253 (IGISLSLYSVLWTVNGILIVL), 269 to 289 (LKAQMVIGFIIFIVSFSMLLT), 293 to 313 (FPMFLAAMVILTIGEMLVWPA), 333 to 353 (FVNSAATGGRMIGPLFGGVLV), and 360 to 380 (ALVLSLLVLLLISIATTLLYD).

This sequence belongs to the major facilitator superfamily.

It localises to the cell membrane. This is an uncharacterized protein from Bacillus subtilis (strain 168).